Here is an 812-residue protein sequence, read N- to C-terminus: ISWI one complex protein 2 (812 aa).

4 disordered regions span residues 1-21 (MRTK…AGAA), 614-646 (MGNS…KRKP), 679-704 (AKQR…LEEL), and 762-812 (QTGS…PPTN). The span at 627-638 (PQSTLEPSTKSS) shows a compositional bias: polar residues. Positions 673-714 (ELKIIRAKQRKQQEDRERRKKMKEEKKRLEELAKKRELTESV) form a coiled coil. Residues 683–704 (KQQEDRERRKKMKEEKKRLEEL) show a composition bias toward basic and acidic residues. Over residues 769 to 796 (PQAPQAPQTSQASIQPQQQQQQQQQQQP) the composition is skewed to low complexity.

Component of the ISW1B complex, which at least consists of ISW1, IOC2 and IOC4.

It is found in the nucleus. Functions as a component of the ISW1B complex, which acts in remodeling the chromatin by catalyzing an ATP-dependent alteration in the structure of nucleosomal DNA. The ISW1B complex acts within coding regions to control the amount of RNA polymerase II released into productive elongation and to coordinate elongation with termination and pre-mRNA processing. The sequence is that of ISWI one complex protein 2 (IOC2) from Saccharomyces cerevisiae (strain ATCC 204508 / S288c) (Baker's yeast).